The chain runs to 152 residues: Endoribonuclease YbeY (152 aa).

Zn(2+)-binding residues include His-117, His-121, and His-127.

The protein belongs to the endoribonuclease YbeY family. It depends on Zn(2+) as a cofactor.

It is found in the cytoplasm. In terms of biological role, single strand-specific metallo-endoribonuclease involved in late-stage 70S ribosome quality control and in maturation of the 3' terminus of the 16S rRNA. In Sulfurihydrogenibium sp. (strain YO3AOP1), this protein is Endoribonuclease YbeY.